The sequence spans 107 residues: Nucleoid-associated protein RC1_2305 (107 aa).

This sequence belongs to the YbaB/EbfC family. Homodimer.

The protein resides in the cytoplasm. The protein localises to the nucleoid. Binds to DNA and alters its conformation. May be involved in regulation of gene expression, nucleoid organization and DNA protection. In Rhodospirillum centenum (strain ATCC 51521 / SW), this protein is Nucleoid-associated protein RC1_2305.